A 337-amino-acid polypeptide reads, in one-letter code: Phosphatidate cytidylyltransferase, mitochondrial (337 aa).

Belongs to the TAM41 family. Requires Mg(2+) as cofactor. As to expression, brain and liver.

The protein localises to the mitochondrion inner membrane. It catalyses the reaction a 1,2-diacyl-sn-glycero-3-phosphate + CTP + H(+) = a CDP-1,2-diacyl-sn-glycerol + diphosphate. It participates in phospholipid metabolism; CDP-diacylglycerol biosynthesis; CDP-diacylglycerol from sn-glycerol 3-phosphate: step 3/3. Catalyzes the conversion of phosphatidic acid (PA) to CDP-diacylglycerol (CDP-DAG), an essential intermediate in the synthesis of phosphatidylglycerol, cardiolipin and phosphatidylinositol. The sequence is that of Phosphatidate cytidylyltransferase, mitochondrial (Tamm41) from Rattus norvegicus (Rat).